A 143-amino-acid polypeptide reads, in one-letter code: Regulator of ribonuclease activity B (143 aa).

Residues 113–143 form a disordered region; it reads EDPNAEEDEYGDDGEFFDDEDEADFNNAKVH. Acidic residues predominate over residues 115 to 136; it reads PNAEEDEYGDDGEFFDDEDEAD.

The protein belongs to the RraB family. In terms of assembly, interacts with the C-terminal region of Rne.

The protein resides in the cytoplasm. Its function is as follows. Globally modulates RNA abundance by binding to RNase E (Rne) and regulating its endonucleolytic activity. Can modulate Rne action in a substrate-dependent manner by altering the composition of the degradosome. This is Regulator of ribonuclease activity B from Haemophilus ducreyi (strain 35000HP / ATCC 700724).